The chain runs to 284 residues: RNase adapter protein RapZ (284 aa).

8 to 15 lines the ATP pocket; the sequence is GRSGSGKS. Position 56 to 59 (56 to 59) interacts with GTP; that stretch reads DVRN. The RNA-binding stretch occupies residues 266–284; it reads RSRGKNVQSRHRTLEKRKP.

The protein belongs to the RapZ-like family. RapZ subfamily. Homotrimer.

In terms of biological role, modulates the synthesis of GlmS, by affecting the processing and stability of the regulatory small RNA GlmZ. When glucosamine-6-phosphate (GlcN6P) concentrations are high in the cell, RapZ binds GlmZ and targets it to cleavage by RNase E. Consequently, GlmZ is inactivated and unable to activate GlmS synthesis. Under low GlcN6P concentrations, RapZ is sequestered and inactivated by an other regulatory small RNA, GlmY, preventing GlmZ degradation and leading to synthesis of GlmS. In Shigella boydii serotype 18 (strain CDC 3083-94 / BS512), this protein is RNase adapter protein RapZ.